The sequence spans 81 residues: Small ribosomal subunit protein bS16 (81 aa).

Belongs to the bacterial ribosomal protein bS16 family.

The sequence is that of Small ribosomal subunit protein bS16 from Neisseria gonorrhoeae (strain ATCC 700825 / FA 1090).